Here is a 496-residue protein sequence, read N- to C-terminus: UDP-N-acetylmuramate--L-alanine ligase (496 aa).

122-128 is a binding site for ATP; the sequence is GTHGKTT.

This sequence belongs to the MurCDEF family.

The protein resides in the cytoplasm. The catalysed reaction is UDP-N-acetyl-alpha-D-muramate + L-alanine + ATP = UDP-N-acetyl-alpha-D-muramoyl-L-alanine + ADP + phosphate + H(+). Its pathway is cell wall biogenesis; peptidoglycan biosynthesis. Its function is as follows. Cell wall formation. This Mycolicibacterium paratuberculosis (strain ATCC BAA-968 / K-10) (Mycobacterium paratuberculosis) protein is UDP-N-acetylmuramate--L-alanine ligase.